The following is a 281-amino-acid chain: Aquaporin-9 (281 aa).

Over methionine 1–arginine 17 the chain is Cytoplasmic. Residues aspartate 18–serine 36 traverse the membrane as a helical segment. Over alanine 37–leucine 50 the chain is Extracellular. Residues phenylalanine 51–alanine 69 traverse the membrane as a helical segment. At methionine 70–serine 71 the chain is on the cytoplasmic side. An intramembrane region (discontinuously helical) is located at residues glycine 72–alanine 84. Residues asparagine 76–alanine 78 carry the NPA 1 motif. Over leucine 85 to serine 90 the chain is Cytoplasmic. Residues tryptophan 91 to isoleucine 115 traverse the membrane as a helical segment. The Extracellular portion of the chain corresponds to tyrosine 116–glycine 157. N-linked (GlcNAc...) asparagine glycans are attached at residues asparagine 117 and asparagine 128. A helical membrane pass occupies residues alanine 158–alanine 175. At isoleucine 176–glycine 187 the chain is on the cytoplasmic side. A helical transmembrane segment spans residues leucine 188–phenylalanine 204. The Extracellular portion of the chain corresponds to serine 205–serine 207. The discontinuously helical intramembrane region spans threonine 208 to leucine 222. Positions asparagine 213 to alanine 215 match the NPA 2 motif. The Extracellular segment spans residues tryptophan 223–tryptophan 241. Residues phenylalanine 242–leucine 262 form a helical membrane-spanning segment. Residues leucine 263 to proline 281 lie on the Cytoplasmic side of the membrane.

This sequence belongs to the MIP/aquaporin (TC 1.A.8) family.

It localises to the cell membrane. The catalysed reaction is H2O(in) = H2O(out). Aquaglyceroporin that may modulate the water content and osmolytes during anhydrobiosis. This Milnesium tardigradum (Water bear) protein is Aquaporin-9.